Here is a 331-residue protein sequence, read N- to C-terminus: 5,10-methylenetetrahydromethanopterin reductase (331 aa).

This sequence belongs to the mer family.

It is found in the cytoplasm. The enzyme catalyses 5-methyl-5,6,7,8-tetrahydromethanopterin + oxidized coenzyme F420-(gamma-L-Glu)(n) + H(+) = 5,10-methylenetetrahydromethanopterin + reduced coenzyme F420-(gamma-L-Glu)(n). Its pathway is one-carbon metabolism; methanogenesis from CO(2); methyl-coenzyme M from 5,10-methylene-5,6,7,8-tetrahydromethanopterin: step 1/2. Functionally, catalyzes the reversible reduction of methylene-H(4)MPT to methyl-H(4)MPT. This Methanocaldococcus jannaschii (strain ATCC 43067 / DSM 2661 / JAL-1 / JCM 10045 / NBRC 100440) (Methanococcus jannaschii) protein is 5,10-methylenetetrahydromethanopterin reductase.